The chain runs to 462 residues: uncharacterized protein (462 aa).

The region spanning 12-70 (MLKKNDIIQVAISDLSHEGAGVAKHDGFVFFVDNALPEEVIDMRVLKVNKNSGFGKVEA) is the TRAM domain. Residues Q294, Y323, E344, and D392 each coordinate S-adenosyl-L-methionine. The active-site Nucleophile is the C419.

It belongs to the class I-like SAM-binding methyltransferase superfamily. RNA M5U methyltransferase family.

This is an uncharacterized protein from Streptococcus pyogenes serotype M1.